The sequence spans 380 residues: Cytochrome b (380 aa).

A run of 4 helical transmembrane segments spans residues 34–54 (FGSL…LLAM), 78–99 (WLIR…YLHI), 114–134 (WNTG…GYVL), and 179–199 (FFAL…IHLT). Residues His84 and His98 each contribute to the heme b site. Heme b is bound by residues His183 and His197. His202 contacts a ubiquinone. The next 4 helical transmembrane spans lie at 227–247 (LKDI…ALFS), 289–309 (LGGV…PFLH), 321–341 (LSQL…WVGS), and 348–368 (FIII…ILFP).

It belongs to the cytochrome b family. As to quaternary structure, the cytochrome bc1 complex contains 11 subunits: 3 respiratory subunits (MT-CYB, CYC1 and UQCRFS1), 2 core proteins (UQCRC1 and UQCRC2) and 6 low-molecular weight proteins (UQCRH/QCR6, UQCRB/QCR7, UQCRQ/QCR8, UQCR10/QCR9, UQCR11/QCR10 and a cleavage product of UQCRFS1). This cytochrome bc1 complex then forms a dimer. Heme b serves as cofactor.

It localises to the mitochondrion inner membrane. In terms of biological role, component of the ubiquinol-cytochrome c reductase complex (complex III or cytochrome b-c1 complex) that is part of the mitochondrial respiratory chain. The b-c1 complex mediates electron transfer from ubiquinol to cytochrome c. Contributes to the generation of a proton gradient across the mitochondrial membrane that is then used for ATP synthesis. The chain is Cytochrome b (MT-CYB) from Calonectris leucomelas (Streaked shearwater).